The following is a 3595-amino-acid chain: Replicase polyprotein 1ab (3595 aa).

The C4-type; atypical zinc-finger motif lies at 3–23; that stretch reads CECPRSNLVVMCSGAFCCVLC. One can recognise a Peptidase C31 domain in the interval 56 to 164; the sequence is SGLEGRYCAL…PTTIPFNTTG (109 aa). Catalysis depends on for Nsp1-alpha papain-like cysteine proteinase activity residues Cys-63 and His-130. Positions 239 to 350 constitute a Peptidase C32 domain; sequence LSFEHGRCWL…LKLPGKTYFG (112 aa). Active-site for Nsp1-beta papain-like cysteine proteinase activity residues include Cys-246 and His-309. Active-site for Nsp2 cysteine proteinase activity residues include Cys-378 and His-430. A disordered region spans residues 482 to 527; it reads RRGGGKKSGQSSGVRAPGRTTPDLAGDWGKAVDDQEKTASKVTTDK. The segment covering 511–520 has biased composition (basic and acidic residues); the sequence is KAVDDQEKTA. Positions 633–736 constitute a Peptidase C33 domain; sequence TFIPPPDGGC…HGWCSSLLSE (104 aa). A disordered region spans residues 808–862; it reads QVRTVDPSQPAAPLPPVPRPRKRKAAAQQVSKVPSEQDPSLAHDPPEKPDSVRPP. Residues 851 to 860 show a composition bias toward basic and acidic residues; it reads DPPEKPDSVR. Helical transmembrane passes span 922 to 942, 951 to 971, 1019 to 1039, 1239 to 1259, 1316 to 1336, 1345 to 1365, and 1381 to 1401; these read MFFLFLGSPLFILCAVLAGVI, ILCCCLVVVYICTLFADAISS, VALFPLHLLLLMVDVLLVIGV, IFRTALAAAWVLFFVCAGYWV, PYIVLAACLVYLASVYVPGII, ALLPAGPAISALRTLVMIIAA, and AFVDFTSVVVVLTALLVGWIL. Positions 922–1039 are HD1; it reads MFFLFLGSPL…MVDVLLVIGV (118 aa). The interval 1239–1399 is HD2; the sequence is IFRTALAAAW…VVLTALLVGW (161 aa). The Peptidase S32 domain occupies 1464 to 1664; the sequence is GLLREKTRAS…RLLESSINLE (201 aa). Residues His-1502, Asp-1527, and Ser-1580 each act as charge relay system; for 3C-like serine proteinase activity in the active site. 4 consecutive transmembrane segments (helical) span residues 1673-1693, 1711-1731, 1744-1764, and 1784-1804; these read IIVAVVLWKYAVDPLSIPFVV, YNYSLFCLAAFSPLASRIFFI, ALICHACFAGIAVLNDFIILG, and AIAIAVIGALVCVAACCLELF. Positions 1687–1804 are HD3; it reads LSIPFVVAFF…CVAACCLELF (118 aa). Positions 2083 to 2253 constitute a NiRAN domain; it reads DMNRLRAIIS…YPYKLHPVRG (171 aa). Residues 2491–2625 enclose the RdRp catalytic domain; it reads GRCLETDLAS…LNESDDLPNF (135 aa). One can recognise an AV ZBD domain in the interval 2746–2812; it reads GKEVQVCSIC…IPILKDRTKF (67 aa). Positions 2752, 2755, 2765, 2770, 2773, 2777, 2779, 2782, 2789, 2791, 2798, and 2801 each coordinate Zn(2+). The (+)RNA virus helicase ATP-binding domain occupies 2862–3022; it reads DLPDGKYSMK…VFELMKKNAL (161 aa). Residue 2897-2904 coordinates ATP; it reads GPPGSGKT. One can recognise a (+)RNA virus helicase C-terminal domain in the interval 3023–3157; it reads HAIYRFGQNI…DGKARVMLSD (135 aa). An AV-Nsp11N/CoV-Nsp15M domain is found at 3196-3292; that stretch reads SGSLSPLPRV…LTKFLDGRAV (97 aa). The NendoU domain maps to 3294–3416; it reads MEDSVYSTGR…MVWRDQTMYF (123 aa). Catalysis depends on residues His-3325, His-3340, and Lys-3369.

This sequence belongs to the arteriviridae polyprotein family. In terms of processing, specific enzymatic cleavages in vivo by its own proteases yield mature proteins. There are two alternative pathways for processing. Either nsp4-5 is cleaved, which represents the major pathway or the nsp5-6 and nsp6-7 are processed, which represents the minor pathway. The major pathway occurs when nsp2 acts as a cofactor for nsp4.

The protein resides in the host membrane. It is found in the host cytoplasm. It localises to the host perinuclear region. It carries out the reaction RNA(n) + a ribonucleoside 5'-triphosphate = RNA(n+1) + diphosphate. The enzyme catalyses ATP + H2O = ADP + phosphate + H(+). It catalyses the reaction uridylyl-uridylyl-ribonucleotide-RNA = a 3'-end uridylyl-2',3'-cyclophospho-uridine-RNA + a 5'-end dephospho-ribonucleoside-RNA. Its function is as follows. The replicase polyprotein 1ab is a multifunctional protein: it contains the activities necessary for the transcription of negative stranded RNA, leader RNA, subgenomic mRNAs and progeny virion RNA as well as proteinases responsible for the cleavage of the polyprotein into functional products. In terms of biological role, the Nsp1 chain is essential for viral subgenomic mRNA synthesis. The 3C-like serine proteinase chain is responsible for the majority of cleavages as it cleaves the C-terminus of the polyprotein. Functionally, plays a role in viral transcription/replication and prevents the simultaneous activation of host cell dsRNA sensors, such as MDA5/IFIH1, OAS, and PKR. Acts by degrading the 5'-polyuridines generated during replication of the poly(A) region of viral genomic and subgenomic RNAs. Catalyzes a two-step reaction in which a 2'3'-cyclic phosphate (2'3'-cP) is first generated by 2'-O transesterification, which is then hydrolyzed to a 3'-phosphate (3'-P). If not degraded, poly(U) RNA would hybridize with poly(A) RNA tails and activate host dsRNA sensors. Its function is as follows. The helicase chain, which contains a zinc finger structure, displays RNA and DNA duplex-unwinding activities with 5' to 3' polarity. This chain is Replicase polyprotein 1ab (rep), found in Simian hemorrhagic fever virus (SHFV).